Consider the following 443-residue polypeptide: Clustered-asparagine-rich protein (443 aa).

The region spanning 16-106 (TKLHIQNIPP…RNIDAKFAVP (91 aa)) is the RRM 1 domain. The tract at residues 253 to 279 (NHLNNNNNNINNNNNNNNNNNNNNNVM) is disordered. The span at 256 to 277 (NNNNNNINNNNNNNNNNNNNNN) shows a compositional bias: low complexity. The RRM 2 domain occupies 342-435 (SSITIMKKQN…KYLKVQLKKG (94 aa)).

The protein is Clustered-asparagine-rich protein of Plasmodium falciparum.